The sequence spans 331 residues: tRNA U34 carboxymethyltransferase (331 aa).

Residues lysine 91, tryptophan 105, lysine 110, glycine 130, 152–154, 181–182, methionine 196, tyrosine 200, and arginine 315 each bind carboxy-S-adenosyl-L-methionine; these read DPS and IE.

This sequence belongs to the class I-like SAM-binding methyltransferase superfamily. CmoB family. Homotetramer.

It carries out the reaction carboxy-S-adenosyl-L-methionine + 5-hydroxyuridine(34) in tRNA = 5-carboxymethoxyuridine(34) in tRNA + S-adenosyl-L-homocysteine + H(+). In terms of biological role, catalyzes carboxymethyl transfer from carboxy-S-adenosyl-L-methionine (Cx-SAM) to 5-hydroxyuridine (ho5U) to form 5-carboxymethoxyuridine (cmo5U) at position 34 in tRNAs. This is tRNA U34 carboxymethyltransferase from Shewanella baltica (strain OS155 / ATCC BAA-1091).